We begin with the raw amino-acid sequence, 42 residues long: Alpha-lactalbumin I (42 aa).

The 42-residue stretch at Ile1–Val42 folds into the C-type lysozyme domain.

This sequence belongs to the glycosyl hydrolase 22 family. As to quaternary structure, lactose synthase (LS) is a heterodimer of a catalytic component, beta1,4-galactosyltransferase (beta4Gal-T1) and a regulatory component, alpha-lactalbumin (LA). In terms of tissue distribution, mammary gland specific. Secreted in milk.

It localises to the secreted. Its function is as follows. Regulatory subunit of lactose synthase, changes the substrate specificity of galactosyltransferase in the mammary gland making glucose a good acceptor substrate for this enzyme. This enables LS to synthesize lactose, the major carbohydrate component of milk. In other tissues, galactosyltransferase transfers galactose onto the N-acetylglucosamine of the oligosaccharide chains in glycoproteins. The protein is Alpha-lactalbumin I (LALBA) of Macropus giganteus (Eastern gray kangaroo).